The sequence spans 81 residues: Beta-catenin-interacting protein 1 (81 aa).

Ser59 is subject to Phosphoserine.

It belongs to the CTNNBIP1 family. In terms of assembly, binds CTNNB1.

It is found in the cytoplasm. It localises to the nucleus. Functionally, prevents the interaction between CTNNB1 and TCF family members, and acts as a negative regulator of the Wnt signaling pathway. The protein is Beta-catenin-interacting protein 1 (CTNNBIP1) of Bos taurus (Bovine).